The following is a 349-amino-acid chain: UDP-3-O-acylglucosamine N-acyltransferase (349 aa).

The active-site Proton acceptor is His246.

The protein belongs to the transferase hexapeptide repeat family. LpxD subfamily. In terms of assembly, homotrimer.

It carries out the reaction a UDP-3-O-[(3R)-3-hydroxyacyl]-alpha-D-glucosamine + a (3R)-hydroxyacyl-[ACP] = a UDP-2-N,3-O-bis[(3R)-3-hydroxyacyl]-alpha-D-glucosamine + holo-[ACP] + H(+). It functions in the pathway bacterial outer membrane biogenesis; LPS lipid A biosynthesis. Catalyzes the N-acylation of UDP-3-O-acylglucosamine using 3-hydroxyacyl-ACP as the acyl donor. Is involved in the biosynthesis of lipid A, a phosphorylated glycolipid that anchors the lipopolysaccharide to the outer membrane of the cell. The polypeptide is UDP-3-O-acylglucosamine N-acyltransferase (Trichormus variabilis (strain ATCC 29413 / PCC 7937) (Anabaena variabilis)).